We begin with the raw amino-acid sequence, 363 residues long: Melanoma-associated antigen B16 (363 aa).

The disordered stretch occupies residues 33–124; sequence EPCSSPHLMA…PDQSDSTDLP (92 aa). Low complexity predominate over residues 82 to 97; sequence ASTSSDLQHPYDSSSE. Positions 128–327 constitute an MAGE domain; that stretch reads VDGKVDFLVN…TVFLSQYEEA (200 aa). Residues 342 to 363 are disordered; the sequence is HADSSSTSGESSSDTSSNFSQV.

The chain is Melanoma-associated antigen B16 (Mageb16) from Mus musculus (Mouse).